Reading from the N-terminus, the 122-residue chain is UPF0102 protein VV1_0590 (122 aa).

It belongs to the UPF0102 family.

The chain is UPF0102 protein VV1_0590 from Vibrio vulnificus (strain CMCP6).